Here is a 758-residue protein sequence, read N- to C-terminus: General transcription and DNA repair factor IIH helicase subunit XPD (758 aa).

The 279-residue stretch at 7–285 folds into the Helicase ATP-binding domain; that stretch reads DVTVYFPYDN…TDAGRLRAEY (279 aa). ATP is bound at residue 42–49; that stretch reads MPTGTGKT. Residues Cys-116, Cys-134, Cys-155, and Cys-190 each coordinate [4Fe-4S] cluster. The DEAH box signature appears at 234 to 238; the sequence is DEAHN.

The protein belongs to the helicase family. RAD3/XPD subfamily. Component of the 7-subunit TFIIH core complex composed of XPB, XPD, TFB1/GTF2H1, GTF2H2/P44, TFB4/GTF2H3, TFB2/GTF2H4 and TFB5/GTF2H5, which is active in NER. The core complex associates with the 3-subunit CDK-activating kinase (CAK) module composed of CYCH1/cyclin H1, CDKD and MAT1/At4g30820 to form the 10-subunit holoenzyme (holo-TFIIH) active in transcription. Interacts with GTF2H2/p44. Requires [4Fe-4S] cluster as cofactor. Expressed at low levels in all tissues.

The protein localises to the nucleus. The catalysed reaction is Couples ATP hydrolysis with the unwinding of duplex DNA at the replication fork by translocating in the 5'-3' direction. This creates two antiparallel DNA single strands (ssDNA). The leading ssDNA polymer is the template for DNA polymerase III holoenzyme which synthesizes a continuous strand.. It carries out the reaction ATP + H2O = ADP + phosphate + H(+). In terms of biological role, ATP-dependent 5'-3' DNA helicase, component of the general transcription and DNA repair factor IIH (TFIIH) core complex, which is involved in general and transcription-coupled nucleotide excision repair (NER) of damaged DNA and, when complexed to CDK-activating kinase (CAK), involved in transcription by RNA polymerase II. In NER, TFIIH acts by opening DNA around the lesion to allow the excision of the damaged oligonucleotide and its replacement by a new DNA fragment. The ATP-dependent helicase activity of XPD is required for DNA opening. In transcription, TFIIH has an essential role in transcription initiation. When the pre-initiation complex (PIC) has been established, TFIIH is required for promoter opening and promoter escape. Phosphorylation of the C-terminal tail (CTD) of the largest subunit of RNA polymerase II by the kinase module CAK controls the initiation of transcription. XPD acts by forming a bridge between CAK and the core-TFIIH complex. Essential during plant growth. May negatively regulate a common response program mediated by UV damage and heat stress, that leads to tissue death and reduced chloroplast function. This is General transcription and DNA repair factor IIH helicase subunit XPD from Arabidopsis thaliana (Mouse-ear cress).